A 454-amino-acid chain; its full sequence is tRNA modification GTPase MnmE (454 aa).

(6S)-5-formyl-5,6,7,8-tetrahydrofolate contacts are provided by R23, E80, and K120. In terms of domain architecture, TrmE-type G spans 216–377 (GMKVVIAGRP…LRNHLKQSMG (162 aa)). A K(+)-binding site is contributed by N226. GTP-binding positions include 226 to 231 (NAGKSS), 245 to 251 (TDIAGTT), 270 to 273 (DTAG), 335 to 338 (NKAD), and 358 to 360 (SAR). S230 is a binding site for Mg(2+). 3 residues coordinate K(+): T245, I247, and T250. T251 lines the Mg(2+) pocket. K454 is a binding site for (6S)-5-formyl-5,6,7,8-tetrahydrofolate.

It belongs to the TRAFAC class TrmE-Era-EngA-EngB-Septin-like GTPase superfamily. TrmE GTPase family. Homodimer. Heterotetramer of two MnmE and two MnmG subunits. Requires K(+) as cofactor.

Its subcellular location is the cytoplasm. In terms of biological role, exhibits a very high intrinsic GTPase hydrolysis rate. Involved in the addition of a carboxymethylaminomethyl (cmnm) group at the wobble position (U34) of certain tRNAs, forming tRNA-cmnm(5)s(2)U34. The sequence is that of tRNA modification GTPase MnmE from Escherichia coli O7:K1 (strain IAI39 / ExPEC).